The primary structure comprises 20 residues: ATP synthase subunit beta, chloroplastic (20 aa).

A compositionally biased stretch (polar residues) spans Met-1–Tyr-10. Positions Met-1–Asp-20 are disordered.

The protein belongs to the ATPase alpha/beta chains family. As to quaternary structure, F-type ATPases have 2 components, CF(1) - the catalytic core - and CF(0) - the membrane proton channel. CF(1) has five subunits: alpha(3), beta(3), gamma(1), delta(1), epsilon(1). CF(0) has four main subunits: a(1), b(1), b'(1) and c(9-12).

The protein localises to the plastid. Its subcellular location is the chloroplast thylakoid membrane. The catalysed reaction is ATP + H2O + 4 H(+)(in) = ADP + phosphate + 5 H(+)(out). Its function is as follows. Produces ATP from ADP in the presence of a proton gradient across the membrane. The catalytic sites are hosted primarily by the beta subunits. The protein is ATP synthase subunit beta, chloroplastic of Chattonella marina var. antiqua (Red tide flagellate).